The sequence spans 275 residues: Calcyphosin (275 aa).

The interval 59–87 (PGTTQLTQGPAGRTLGQTQASCPEPRPSM) is disordered. 4 EF-hand domains span residues 107-142 (SGIQ…LGLV), 143-178 (LDQA…PMSQ), 179-214 (AREA…RAHP), and 222-258 (TEDE…VSAS). Ca(2+) is bound by residues D120, D122, S124, S126, E131, D156, N158, S160, T162, E167, D192, S194, D196, and D203. S126 carries the post-translational modification Phosphoserine; by PKA.

As to quaternary structure, monomer. Does not form oligomers in the presence of calcium.

Its subcellular location is the cytoplasm. Functionally, calcium-binding protein. May play a role in cellular signaling events (Potential). The protein is Calcyphosin of Homo sapiens (Human).